A 604-amino-acid polypeptide reads, in one-letter code: Elongation factor 4 1 (604 aa).

Residues 10-191 (EHIRNFCIIA…AIVDSVPAPT (182 aa)) enclose the tr-type G domain. GTP-binding positions include 22-27 (DHGKST) and 138-141 (NKID).

Belongs to the TRAFAC class translation factor GTPase superfamily. Classic translation factor GTPase family. LepA subfamily.

It localises to the cell inner membrane. The catalysed reaction is GTP + H2O = GDP + phosphate + H(+). Functionally, required for accurate and efficient protein synthesis under certain stress conditions. May act as a fidelity factor of the translation reaction, by catalyzing a one-codon backward translocation of tRNAs on improperly translocated ribosomes. Back-translocation proceeds from a post-translocation (POST) complex to a pre-translocation (PRE) complex, thus giving elongation factor G a second chance to translocate the tRNAs correctly. Binds to ribosomes in a GTP-dependent manner. This chain is Elongation factor 4 1, found in Rhodopirellula baltica (strain DSM 10527 / NCIMB 13988 / SH1).